A 323-amino-acid chain; its full sequence is 4-diphosphocytidyl-2-C-methyl-D-erythritol kinase (323 aa).

Lys25 is a catalytic residue. Residue 110 to 120 participates in ATP binding; the sequence is PVAGGMAGGSA. Asp152 is an active-site residue.

This sequence belongs to the GHMP kinase family. IspE subfamily.

The enzyme catalyses 4-CDP-2-C-methyl-D-erythritol + ATP = 4-CDP-2-C-methyl-D-erythritol 2-phosphate + ADP + H(+). Its pathway is isoprenoid biosynthesis; isopentenyl diphosphate biosynthesis via DXP pathway; isopentenyl diphosphate from 1-deoxy-D-xylulose 5-phosphate: step 3/6. In terms of biological role, catalyzes the phosphorylation of the position 2 hydroxy group of 4-diphosphocytidyl-2C-methyl-D-erythritol. The protein is 4-diphosphocytidyl-2-C-methyl-D-erythritol kinase of Mycobacterium leprae (strain Br4923).